Reading from the N-terminus, the 337-residue chain is Biotin synthase (337 aa).

The region spanning Q39–R267 is the Radical SAM core domain. C54, C58, and C61 together coordinate [4Fe-4S] cluster. The [2Fe-2S] cluster site is built by C98, C130, C190, and R262.

This sequence belongs to the radical SAM superfamily. Biotin synthase family. As to quaternary structure, homodimer. The cofactor is [4Fe-4S] cluster. [2Fe-2S] cluster serves as cofactor.

It carries out the reaction (4R,5S)-dethiobiotin + (sulfur carrier)-SH + 2 reduced [2Fe-2S]-[ferredoxin] + 2 S-adenosyl-L-methionine = (sulfur carrier)-H + biotin + 2 5'-deoxyadenosine + 2 L-methionine + 2 oxidized [2Fe-2S]-[ferredoxin]. Its pathway is cofactor biosynthesis; biotin biosynthesis; biotin from 7,8-diaminononanoate: step 2/2. Its function is as follows. Catalyzes the conversion of dethiobiotin (DTB) to biotin by the insertion of a sulfur atom into dethiobiotin via a radical-based mechanism. The chain is Biotin synthase from Cytophaga hutchinsonii (strain ATCC 33406 / DSM 1761 / CIP 103989 / NBRC 15051 / NCIMB 9469 / D465).